A 207-amino-acid chain; its full sequence is ATP-dependent Clp protease proteolytic subunit (207 aa).

S111 functions as the Nucleophile in the catalytic mechanism. Residue H136 is part of the active site.

This sequence belongs to the peptidase S14 family. In terms of assembly, fourteen ClpP subunits assemble into 2 heptameric rings which stack back to back to give a disk-like structure with a central cavity, resembling the structure of eukaryotic proteasomes.

It is found in the cytoplasm. The catalysed reaction is Hydrolysis of proteins to small peptides in the presence of ATP and magnesium. alpha-casein is the usual test substrate. In the absence of ATP, only oligopeptides shorter than five residues are hydrolyzed (such as succinyl-Leu-Tyr-|-NHMec, and Leu-Tyr-Leu-|-Tyr-Trp, in which cleavage of the -Tyr-|-Leu- and -Tyr-|-Trp bonds also occurs).. Its function is as follows. Cleaves peptides in various proteins in a process that requires ATP hydrolysis. Has a chymotrypsin-like activity. Plays a major role in the degradation of misfolded proteins. The sequence is that of ATP-dependent Clp protease proteolytic subunit from Aeromonas salmonicida (strain A449).